We begin with the raw amino-acid sequence, 166 residues long: UPF0260 protein GbCGDNIH1_2046 (166 aa).

A disordered region spans residues 147–166; it reads RFPRPRRPRQEPAGKTADES. The segment covering 154–166 has biased composition (basic and acidic residues); sequence PRQEPAGKTADES.

It belongs to the UPF0260 family.

The polypeptide is UPF0260 protein GbCGDNIH1_2046 (Granulibacter bethesdensis (strain ATCC BAA-1260 / CGDNIH1)).